Consider the following 492-residue polypeptide: N-succinylglutamate 5-semialdehyde dehydrogenase (492 aa).

220 to 225 serves as a coordination point for NAD(+); that stretch reads GRANTG. Catalysis depends on residues E243 and C277.

Belongs to the aldehyde dehydrogenase family. AstD subfamily.

It carries out the reaction N-succinyl-L-glutamate 5-semialdehyde + NAD(+) + H2O = N-succinyl-L-glutamate + NADH + 2 H(+). The protein operates within amino-acid degradation; L-arginine degradation via AST pathway; L-glutamate and succinate from L-arginine: step 4/5. Catalyzes the NAD-dependent reduction of succinylglutamate semialdehyde into succinylglutamate. In Shigella boydii serotype 4 (strain Sb227), this protein is N-succinylglutamate 5-semialdehyde dehydrogenase.